Consider the following 120-residue polypeptide: Chaperonin GroEL (120 aa).

Residue 23–27 (DGTTT) coordinates ATP.

Belongs to the chaperonin (HSP60) family. As to quaternary structure, forms a cylinder of 14 subunits composed of two heptameric rings stacked back-to-back. Interacts with the co-chaperonin GroES.

The protein localises to the cytoplasm. The enzyme catalyses ATP + H2O + a folded polypeptide = ADP + phosphate + an unfolded polypeptide.. In terms of biological role, together with its co-chaperonin GroES, plays an essential role in assisting protein folding. The GroEL-GroES system forms a nano-cage that allows encapsulation of the non-native substrate proteins and provides a physical environment optimized to promote and accelerate protein folding. This Mycobacterium scrofulaceum protein is Chaperonin GroEL.